The following is a 213-amino-acid chain: NADH-quinone oxidoreductase subunit I (213 aa).

2 4Fe-4S ferredoxin-type domains span residues 74 to 103 (RFIE…METS) and 113 to 142 (ENYS…HGTE). [4Fe-4S] cluster-binding residues include Cys-83, Cys-86, Cys-89, Cys-93, Cys-122, Cys-125, Cys-128, and Cys-132.

This sequence belongs to the complex I 23 kDa subunit family. As to quaternary structure, NDH-1 is composed of 14 different subunits. Subunits NuoA, H, J, K, L, M, N constitute the membrane sector of the complex. The cofactor is [4Fe-4S] cluster.

Its subcellular location is the cell inner membrane. The enzyme catalyses a quinone + NADH + 5 H(+)(in) = a quinol + NAD(+) + 4 H(+)(out). Its function is as follows. NDH-1 shuttles electrons from NADH, via FMN and iron-sulfur (Fe-S) centers, to quinones in the respiratory chain. The immediate electron acceptor for the enzyme in this species is believed to be ubiquinone. Couples the redox reaction to proton translocation (for every two electrons transferred, four hydrogen ions are translocated across the cytoplasmic membrane), and thus conserves the redox energy in a proton gradient. The polypeptide is NADH-quinone oxidoreductase subunit I (Campylobacter jejuni subsp. jejuni serotype O:23/36 (strain 81-176)).